Here is a 273-residue protein sequence, read N- to C-terminus: Salivary glue protein Sgs-3 (273 aa).

Positions 1-23 (MKLTIAISLASILLLSVAHVAQG) are cleaved as a signal peptide. Residues 47-57 (TTTTTTTTCAP) show a composition bias toward low complexity. The interval 47-225 (TTTTTTTTCA…TPKPTNKPGC (179 aa)) is disordered. The span at 58–67 (PTRPPPPPCT) shows a compositional bias: pro residues. The span at 83–225 (RRTTTTTRQT…TPKPTNKPGC (143 aa)) shows a compositional bias: low complexity.

The chain is Salivary glue protein Sgs-3 (Sgs3) from Drosophila yakuba (Fruit fly).